The primary structure comprises 279 residues: uncharacterized protein (279 aa).

This is an uncharacterized protein from Acanthamoeba polyphaga mimivirus (APMV).